A 392-amino-acid polypeptide reads, in one-letter code: Probable nucleoredoxin 3 (392 aa).

Thioredoxin domains follow at residues 17-171 and 177-326; these read LYSI…DSKR and EKLL…ELKA.

The protein belongs to the nucleoredoxin family.

It catalyses the reaction [protein]-dithiol + NAD(+) = [protein]-disulfide + NADH + H(+). The catalysed reaction is [protein]-dithiol + NADP(+) = [protein]-disulfide + NADPH + H(+). In terms of biological role, probable thiol-disulfide oxidoreductase that may participate in various redox reactions. The sequence is that of Probable nucleoredoxin 3 from Arabidopsis thaliana (Mouse-ear cress).